The sequence spans 524 residues: Cysteine--tRNA ligase (524 aa).

C29 is a Zn(2+) binding site. Positions 31–41 match the 'HIGH' region motif; that stretch reads PTVQAAPHVGH. 3 residues coordinate Zn(2+): C207, H232, and E236. Residues 246–258 are compositionally biased toward low complexity; it reads ARPASNAASADSP. The interval 246–273 is disordered; the sequence is ARPASNAASADSPGPGGGEPGGGEPSSG. Over residues 259–270 the composition is skewed to gly residues; that stretch reads GPGGGEPGGGEP. The 'KMSKS' region motif lies at 291–295; that stretch reads KMSKS. K294 contributes to the ATP binding site.

This sequence belongs to the class-I aminoacyl-tRNA synthetase family. As to quaternary structure, monomer. Zn(2+) is required as a cofactor.

Its subcellular location is the cytoplasm. It catalyses the reaction tRNA(Cys) + L-cysteine + ATP = L-cysteinyl-tRNA(Cys) + AMP + diphosphate. The polypeptide is Cysteine--tRNA ligase (Frankia casuarinae (strain DSM 45818 / CECT 9043 / HFP020203 / CcI3)).